The following is a 70-amino-acid chain: MRAIISLFLISAMVFSMIQAVPEEXGLQLSEDERGGCLPHNRFCNALSGPRCCSGLKCKELSIWDSTCLG.

Positions 1-20 (MRAIISLFLISAMVFSMIQA) are cleaved as a signal peptide. A propeptide spanning residues 21-34 (VPEEXGLQLSEDER) is cleaved from the precursor. 3 disulfide bridges follow: Cys37/Cys53, Cys44/Cys58, and Cys52/Cys68. Position 69 is a leucine amide (Leu69).

Belongs to the neurotoxin 01 (U2-agtx) family. In terms of tissue distribution, expressed by the venom gland.

It localises to the secreted. In terms of biological role, insect active toxin causing rapid but reversible paralysis in crickets. No activity shown in mammals. Does not show effect on mammalian voltage-gated calcium channels. In Agelena orientalis (Funnel-web spider), this protein is U2-agatoxin-Ao1m.